The primary structure comprises 213 residues: 3-oxoadipate CoA-transferase subunit B (213 aa).

Glu-50 is a catalytic residue.

Belongs to the 3-oxoacid CoA-transferase subunit B family. In terms of assembly, heterodimer.

The enzyme catalyses 3-oxoadipate + succinyl-CoA = 3-oxoadipyl-CoA + succinate. The protein operates within aromatic compound metabolism; beta-ketoadipate pathway; acetyl-CoA and succinyl-CoA from 3-oxoadipate: step 1/2. This Pseudomonas putida (strain ATCC 47054 / DSM 6125 / CFBP 8728 / NCIMB 11950 / KT2440) protein is 3-oxoadipate CoA-transferase subunit B (pcaJ).